Reading from the N-terminus, the 203-residue chain is uncharacterized protein (203 aa).

Residues 1 to 23 (MGSSFVIDRSSSSPAPPRGPAPK) are disordered.

This is an uncharacterized protein from Saccharomyces cerevisiae (strain ATCC 204508 / S288c) (Baker's yeast).